The primary structure comprises 173 residues: Alpha-crystallin A chain (173 aa).

Methionine 1 is subject to N-acetylmethionine. The required for complex formation with BFSP1 and BFSP2; during homooligomerization, mediates the association of 2 dimers to form a tetramer stretch occupies residues 1-63; the sequence is MDVTIQHPWF…RTVLDSGISE (63 aa). Position 6 is a deamidated glutamine; partial (glutamine 6). Residue serine 45 is modified to Phosphoserine. Glutamine 50 bears the Deamidated glutamine; partial mark. Positions 52-164 constitute a sHSP domain; it reads LFRTVLDSGI…AERAIPVSRE (113 aa). N6-acetyllysine is present on lysine 70. Position 90 is a deamidated glutamine; partial (glutamine 90). Lysine 99 bears the N6-acetyllysine mark. Histidine 100 lines the Zn(2+) pocket. Residue asparagine 101 is modified to Deamidated asparagine; partial. Glutamate 102 and histidine 107 together coordinate Zn(2+). Serine 122 carries the phosphoserine modification. Asparagine 123 carries the deamidated asparagine; partial modification. Cysteine 131 and cysteine 142 are disulfide-bonded. At glutamine 147 the chain carries Deamidated glutamine; partial. Histidine 154 serves as a coordination point for Zn(2+). Serine 162 carries an O-linked (GlcNAc) serine glycan.

Belongs to the small heat shock protein (HSP20) family. As to quaternary structure, heteropolymer composed of three CRYAA and one CRYAB subunits. Inter-subunit bridging via zinc ions enhances stability, which is crucial as there is no protein turn over in the lens. Can also form homodimers and homotetramers (dimers of dimers) which serve as the building blocks of homooligomers. Within homooligomers, the zinc-binding motif is created from residues of 3 different molecules. His-100 and Glu-102 from one molecule are ligands of the zinc ion, and His-107 and His-154 residues from additional molecules complete the site with tetrahedral coordination geometry. Part of a complex required for lens intermediate filament formation composed of BFSP1, BFSP2 and CRYAA. In terms of processing, O-glycosylated; contains N-acetylglucosamine side chains. Post-translationally, deamidation of Asn-101 in lens occurs mostly during the first 30 years of age, followed by a small additional amount of deamidation (approximately 5%) during the next approximately 38 years, resulting in a maximum of approximately 50% deamidation during the lifetime of the individual. Phosphorylation on Ser-122 seems to be developmentally regulated. Absent in the first months of life, it appears during the first 12 years of human lifetime. The relative amount of phosphorylated form versus unphosphorylated form does not change over the lifetime of the individual. In terms of processing, acetylation at Lys-70 may increase chaperone activity. Post-translationally, undergoes age-dependent proteolytical cleavage at the C-terminus. Alpha-crystallin A(1-172) is the most predominant form produced most rapidly during the first 12 years of age and after this age is present in approximately 50% of the lens molecules. In young individuals and during the first approximately 30 years of life, less than half molecules contain an intramolecular disulfide bond (oxidized form), while in the remaining fraction the cysteines are in the free sulfhydryl form (reduced form). With aging, the amount of oxidized form increases up to 90% and it becomes a major constituent of high molecular weight aggregates, concomitant with an age-dependent loss of its chaperone activity. The reduced form is undetectable in cataractous lenses. In terms of tissue distribution, expressed in the eye lens (at protein level).

Its subcellular location is the cytoplasm. The protein localises to the nucleus. In terms of biological role, contributes to the transparency and refractive index of the lens. In its oxidized form (absence of intramolecular disulfide bond), acts as a chaperone, preventing aggregation of various proteins under a wide range of stress conditions. Required for the correct formation of lens intermediate filaments as part of a complex composed of BFSP1, BFSP2 and CRYAA. The polypeptide is Alpha-crystallin A chain (CRYAA) (Homo sapiens (Human)).